Reading from the N-terminus, the 542-residue chain is GMP synthase [glutamine-hydrolyzing] (542 aa).

The Glutamine amidotransferase type-1 domain occupies 28-218 (MIVILDFGSQ…VYHICECEPT (191 aa)). The active-site Nucleophile is Cys105. Active-site residues include His192 and Glu194. Residues 219 to 417 (WTTEAFVEEA…IGLPEEIVRR (199 aa)) form the GMPS ATP-PPase domain. 246-252 (SGGVDSS) lines the ATP pocket.

Homodimer.

It catalyses the reaction XMP + L-glutamine + ATP + H2O = GMP + L-glutamate + AMP + diphosphate + 2 H(+). The protein operates within purine metabolism; GMP biosynthesis; GMP from XMP (L-Gln route): step 1/1. Its function is as follows. Catalyzes the synthesis of GMP from XMP. This is GMP synthase [glutamine-hydrolyzing] from Gloeothece citriformis (strain PCC 7424) (Cyanothece sp. (strain PCC 7424)).